The primary structure comprises 247 residues: Small ribosomal subunit protein uS2 (247 aa).

It belongs to the universal ribosomal protein uS2 family.

This is Small ribosomal subunit protein uS2 from Pseudomonas syringae pv. syringae (strain B728a).